The sequence spans 1458 residues: MGSTTQMSDYLVSTTTTSSASSMVTMTSQIENNSLNSNDNTNTTNNNNNNNNNNNNNNNNNNNNNNNNNINNNNNNGGMVGVNHKTHKKTASIGGGKNRAILHDFTFSYFIPNQNRSEDNSNENELGLNNHNVQHQGPIIHLTKNLLHFYKKCNSNFNYISSLNPRRVLTHPSEPLSNDGYDNVNSDYIVYVNDIITNNESGQKYKVLDSLGQGTFGQVVKCKNCDTDELVAIKILKNKQAYFQQGRLEIQTLKSLNDQHDPEDKNHILRLLDSFIHKMHLCIVFELLSVNLFELIKQNNFRGLSTNLIKVFLIQILDALIVLANANIIHCDLKPENILLQNVNSPAIKIIDFGSACYEKSTLYTYIQSRHYRSPEVLVGTVYCASIDMWSLGCISAELFLGLPLFPGNSEYNQISRIVEMRGIFPSDLLDKGKSSTRYFHRHLGSNSDDNNNNNNNNNGKPYYYTLKSEEDYQRDSKTTLLPSKKYFNYKTLPEIIQNYGFKKSMSPQDIEKEKQHRIVFTDFINGLLQLDPNERWSPMQAKEHPFITGQPYNGPFIPDPSKKRHFTYSQPKQIPQHSMLNGNQILNQHQLFQQLQQQQQQQQQQQQQQQQQQQQQQQQQQQQQQHNQFQQQQQQQQQQQQSSSQQHIQIQPLQLFSTPYTSTNNTPNLSSSNSGSSLNNLKKLNLPPFKQQQQQQFSTSQNSDSFNFPNESFSPRGIYIPSSASNIQQQQQPININNNQNGVGSQVSQLALGQSPSLFGTPTNIYPPYSSMYNNSPVATPNSLSFYGSSWGSDSSSISLNPSTPTQKQMFQQQQYSNNNNNNNNNNNNNSNNNNGNNTNNINSNNNNNNVNRRNRSKSDIPSDSFSSSEGMDPQFNLYQQQQQQQQQQQQQQQQQQQQQQQQQQQQQQQQQQLQYQQQFQTLQDLNIEGEKPPIYPNSPHRKRSHSGYLDQYANGYNSQQTNNTQQQQQQQQQQQQQQQQQQQQQQHPSFFSTRMHLDHFNGGSRYRSQSYGDQQFQQQQYKQQQKNLHHQQQQQQRFMQVGSPPTSHLSPPIPQSPLMMSQPLHQTYIPQQQQQQQQQQQQSQPTPFTPQMISQEPISPALMGDASSIWNPSPTEELLFTIDLPNQQNTPHLTPSNSSTNLLGKSASSPLKNSSGGAIPPTPTIPINMEEINNGFSKFHFNDQPSWNSNGNSPWMIQQQQQHQQGFNGNSESMYNDDLIGFSPYNNYSNDYRPQLFNKQSPPSSYNSNKSFYGGSGGGGNNNNNNNSRPTNQNFSNSLLPSQQQNVIFPQNSPPSSYNSSNSLSKSGGNTVKNNSNTGGRPRGDSMKQRFNSTNNLLSGGSYQYQQQQQQQQQQQQQQQQQQQQQQQQQQQQQQQYKKDTPSLMMSPPMNGLKTSSEIGIPSEEIRYQYQQQQLQQQFQQQQQQQQQQQIQQQLQQQQAPPQNRKQVVIGSYRET.

Residues 32–76 show a composition bias toward low complexity; that stretch reads NNSLNSNDNTNTTNNNNNNNNNNNNNNNNNNNNNNNNNINNNNNN. A disordered region spans residues 32–83; it reads NNSLNSNDNTNTTNNNNNNNNNNNNNNNNNNNNNNNNNINNNNNNGGMVGVN. One can recognise a Protein kinase domain in the interval 205–548; the sequence is YKVLDSLGQG…PMQAKEHPFI (344 aa). Residues 211 to 219 and Lys-234 each bind ATP; that span reads LGQGTFGQV. Asp-332 serves as the catalytic Proton acceptor. Disordered regions lie at residues 441–462 and 545–571; these read HRHLGSNSDDNNNNNNNNNGKP and HPFITGQPYNGPFIPDPSKKRHFTYSQ. Low complexity predominate over residues 446-459; the sequence is SNSDDNNNNNNNNN. A coiled-coil region spans residues 588 to 643; that stretch reads NQHQLFQQLQQQQQQQQQQQQQQQQQQQQQQQQQQQQQQHNQFQQQQQQQQQQQQS. Composition is skewed to low complexity over residues 659–709, 791–800, 808–853, and 861–870; these read TPYT…SFNF, SWGSDSSSIS, QKQM…NNVN, and DIPSDSFSSS. Disordered regions lie at residues 659 to 714 and 791 to 874; these read TPYT…NESF and SWGS…EGMD. A coiled-coil region spans residues 878-927; it reads NLYQQQQQQQQQQQQQQQQQQQQQQQQQQQQQQQQQQLQYQQQFQTLQDL. Disordered stretches follow at residues 930-1095, 1128-1161, 1233-1347, 1375-1399, and 1435-1458; these read EGEK…PQMI, NQQNTPHLTPSNSSTNLLGKSASSPLKNSSGGAI, DYRP…SYQY, QQQQYKKDTPSLMMSPPMNGLKTSS, and QQLQQQQAPPQNRKQVVIGSYRET. Low complexity-rich tracts occupy residues 961–988, 1016–1042, and 1064–1093; these read QQTNNTQQQQQQQQQQQQQQQQQQQQQQ, QQFQQQQYKQQQKNLHHQQQQQQRFMQ, and QPLHQTYIPQQQQQQQQQQQQSQPTPFTPQ. 2 stretches are compositionally biased toward polar residues: residues 1128 to 1158 and 1233 to 1245; these read NQQNTPHLTPSNSSTNLLGKSASSPLKNSSG and DYRPQLFNKQSPP. Composition is skewed to low complexity over residues 1246-1255 and 1264-1279; these read SSYNSNKSFY and NNNNNNSRPTNQNFSN. Residues 1280–1291 show a composition bias toward polar residues; sequence SLLPSQQQNVIF. Residues 1292–1309 are compositionally biased toward low complexity; it reads PQNSPPSSYNSSNSLSKS. Composition is skewed to polar residues over residues 1310 to 1321 and 1331 to 1344; these read GGNTVKNNSNTG and QRFNSTNNLLSGGS. Coiled-coil stretches lie at residues 1346–1383 and 1409–1442; these read QYQQQQQQQQQQQQQQQQQQQQQQQQQQQQQQQYKKDT and RYQYQQQQLQQQFQQQQQQQQQQQIQQQLQQQQA.

This sequence belongs to the protein kinase superfamily. CMGC Ser/Thr protein kinase family. MNB/DYRK subfamily.

The protein resides in the cytoplasm. The enzyme catalyses L-seryl-[protein] + ATP = O-phospho-L-seryl-[protein] + ADP + H(+). The catalysed reaction is L-threonyl-[protein] + ATP = O-phospho-L-threonyl-[protein] + ADP + H(+). It carries out the reaction L-tyrosyl-[protein] + ATP = O-phospho-L-tyrosyl-[protein] + ADP + H(+). General sensor of environmental conditions, such as heat stress, effecting changes through pkaC. Essential for survival to nitrosoative and oxidative stresses. Required for cell cycle control, not only at the onset but also during development (aggregation process and postaggregative development). This Dictyostelium discoideum (Social amoeba) protein is Probable serine/threonine-protein kinase yakA (yakA).